The primary structure comprises 196 residues: FMN-dependent NADH:quinone oxidoreductase (196 aa).

FMN-binding positions include Ser10 and 17–19 (SYS).

Belongs to the azoreductase type 1 family. In terms of assembly, homodimer. It depends on FMN as a cofactor.

It catalyses the reaction 2 a quinone + NADH + H(+) = 2 a 1,4-benzosemiquinone + NAD(+). The enzyme catalyses N,N-dimethyl-1,4-phenylenediamine + anthranilate + 2 NAD(+) = 2-(4-dimethylaminophenyl)diazenylbenzoate + 2 NADH + 2 H(+). Its function is as follows. Quinone reductase that provides resistance to thiol-specific stress caused by electrophilic quinones. Also exhibits azoreductase activity. Catalyzes the reductive cleavage of the azo bond in aromatic azo compounds to the corresponding amines. This is FMN-dependent NADH:quinone oxidoreductase from Metamycoplasma arthritidis (strain 158L3-1) (Mycoplasma arthritidis).